The sequence spans 90 residues: UDP-N-acetylglucosamine 1-carboxyvinyltransferase (90 aa).

Belongs to the EPSP synthase family. MurA subfamily.

It localises to the cytoplasm. It catalyses the reaction phosphoenolpyruvate + UDP-N-acetyl-alpha-D-glucosamine = UDP-N-acetyl-3-O-(1-carboxyvinyl)-alpha-D-glucosamine + phosphate. It participates in cell wall biogenesis; peptidoglycan biosynthesis. Cell wall formation. Adds enolpyruvyl to UDP-N-acetylglucosamine. The chain is UDP-N-acetylglucosamine 1-carboxyvinyltransferase (murA) from Mycobacteroides chelonae (Mycobacterium chelonae).